A 186-amino-acid polypeptide reads, in one-letter code: Large ribosomal subunit protein bL9 (186 aa).

Residues 153–186 form a disordered region; sequence ELRQVKSQSQKSQQQEAKQNEVGEATDSDKADQK. Over residues 157–169 the composition is skewed to low complexity; the sequence is VKSQSQKSQQQEA.

The protein belongs to the bacterial ribosomal protein bL9 family.

Functionally, binds to the 23S rRNA. The protein is Large ribosomal subunit protein bL9 of Wolbachia sp. subsp. Brugia malayi (strain TRS).